Reading from the N-terminus, the 546-residue chain is Chaperonin GroEL (546 aa).

ATP-binding positions include 30-33, Lys51, 87-91, Gly415, 478-480, and Asp494; these read TMGP, DGTTT, and NAA.

It belongs to the chaperonin (HSP60) family. Forms a cylinder of 14 subunits composed of two heptameric rings stacked back-to-back. Interacts with the co-chaperonin GroES.

Its subcellular location is the cytoplasm. The catalysed reaction is ATP + H2O + a folded polypeptide = ADP + phosphate + an unfolded polypeptide.. Functionally, together with its co-chaperonin GroES, plays an essential role in assisting protein folding. The GroEL-GroES system forms a nano-cage that allows encapsulation of the non-native substrate proteins and provides a physical environment optimized to promote and accelerate protein folding. This is Chaperonin GroEL from Wolinella succinogenes (strain ATCC 29543 / DSM 1740 / CCUG 13145 / JCM 31913 / LMG 7466 / NCTC 11488 / FDC 602W) (Vibrio succinogenes).